A 122-amino-acid polypeptide reads, in one-letter code: Large ribosomal subunit protein uL14c (122 aa).

The protein belongs to the universal ribosomal protein uL14 family. In terms of assembly, part of the 50S ribosomal subunit.

The protein resides in the plastid. Its function is as follows. Binds to 23S rRNA. This is Large ribosomal subunit protein uL14c (rpl14) from Helicosporidium sp. subsp. Simulium jonesii (Green alga).